The sequence spans 29 residues: Trypsin inhibitor 3 (29 aa).

3 disulfide bridges follow: C3–C20, C10–C22, and C16–C28.

It belongs to the protease inhibitor I7 (squash-type serine protease inhibitor) family.

The protein resides in the secreted. Strongly inhibits trypsin, weakly inhibits chymotrypsin. The chain is Trypsin inhibitor 3 from Cyclanthera pedata (Achocha).